The sequence spans 556 residues: 2-succinyl-5-enolpyruvyl-6-hydroxy-3-cyclohexene-1-carboxylate synthase (556 aa).

This sequence belongs to the TPP enzyme family. MenD subfamily. Homodimer. Mg(2+) is required as a cofactor. Mn(2+) serves as cofactor. Requires thiamine diphosphate as cofactor.

It catalyses the reaction isochorismate + 2-oxoglutarate + H(+) = 5-enolpyruvoyl-6-hydroxy-2-succinyl-cyclohex-3-ene-1-carboxylate + CO2. It participates in quinol/quinone metabolism; 1,4-dihydroxy-2-naphthoate biosynthesis; 1,4-dihydroxy-2-naphthoate from chorismate: step 2/7. It functions in the pathway quinol/quinone metabolism; menaquinone biosynthesis. Catalyzes the thiamine diphosphate-dependent decarboxylation of 2-oxoglutarate and the subsequent addition of the resulting succinic semialdehyde-thiamine pyrophosphate anion to isochorismate to yield 2-succinyl-5-enolpyruvyl-6-hydroxy-3-cyclohexene-1-carboxylate (SEPHCHC). This is 2-succinyl-5-enolpyruvyl-6-hydroxy-3-cyclohexene-1-carboxylate synthase from Escherichia coli (strain UTI89 / UPEC).